The primary structure comprises 557 residues: Potassium-transporting ATPase potassium-binding subunit (557 aa).

Transmembrane regions (helical) follow at residues 6 to 26, 59 to 79, 127 to 147, 172 to 192, 247 to 267, 278 to 298, 363 to 383, 410 to 430, 475 to 495, and 520 to 540; these read IQLL…GLGL, ALSL…ILFF, AGLT…LLAL, LYVL…FGVV, ISNF…VFLY, WAIF…VWTF, IVFG…LLTV, ILGI…SVSV, VMIA…VLVI, and FYIL…FPVL.

This sequence belongs to the KdpA family. In terms of assembly, the system is composed of three essential subunits: KdpA, KdpB and KdpC.

Its subcellular location is the cell inner membrane. Its function is as follows. Part of the high-affinity ATP-driven potassium transport (or Kdp) system, which catalyzes the hydrolysis of ATP coupled with the electrogenic transport of potassium into the cytoplasm. This subunit binds the periplasmic potassium ions and delivers the ions to the membrane domain of KdpB through an intramembrane tunnel. The protein is Potassium-transporting ATPase potassium-binding subunit of Leptospira interrogans serogroup Icterohaemorrhagiae serovar Lai (strain 56601).